We begin with the raw amino-acid sequence, 356 residues long: Protein RecA (356 aa).

69-76 (GPESSGKT) contributes to the ATP binding site.

Belongs to the RecA family.

The protein resides in the cytoplasm. Can catalyze the hydrolysis of ATP in the presence of single-stranded DNA, the ATP-dependent uptake of single-stranded DNA by duplex DNA, and the ATP-dependent hybridization of homologous single-stranded DNAs. It interacts with LexA causing its activation and leading to its autocatalytic cleavage. The chain is Protein RecA from Gloeothece citriformis (strain PCC 7424) (Cyanothece sp. (strain PCC 7424)).